A 388-amino-acid polypeptide reads, in one-letter code: Queuine tRNA-ribosyltransferase (388 aa).

Residue D90 is the Proton acceptor of the active site. Substrate contacts are provided by residues 90–94 (DSGGF), D144, Q205, and G232. The interval 263–269 (GVGTPED) is RNA binding. Catalysis depends on D282, which acts as the Nucleophile. Residues 287-291 (TRNAR) are RNA binding; important for wobble base 34 recognition. Zn(2+) contacts are provided by C320, C322, C325, and H351.

This sequence belongs to the queuine tRNA-ribosyltransferase family. As to quaternary structure, homodimer. Within each dimer, one monomer is responsible for RNA recognition and catalysis, while the other monomer binds to the replacement base PreQ1. The cofactor is Zn(2+).

It catalyses the reaction 7-aminomethyl-7-carbaguanine + guanosine(34) in tRNA = 7-aminomethyl-7-carbaguanosine(34) in tRNA + guanine. It participates in tRNA modification; tRNA-queuosine biosynthesis. Functionally, catalyzes the base-exchange of a guanine (G) residue with the queuine precursor 7-aminomethyl-7-deazaguanine (PreQ1) at position 34 (anticodon wobble position) in tRNAs with GU(N) anticodons (tRNA-Asp, -Asn, -His and -Tyr). Catalysis occurs through a double-displacement mechanism. The nucleophile active site attacks the C1' of nucleotide 34 to detach the guanine base from the RNA, forming a covalent enzyme-RNA intermediate. The proton acceptor active site deprotonates the incoming PreQ1, allowing a nucleophilic attack on the C1' of the ribose to form the product. After dissociation, two additional enzymatic reactions on the tRNA convert PreQ1 to queuine (Q), resulting in the hypermodified nucleoside queuosine (7-(((4,5-cis-dihydroxy-2-cyclopenten-1-yl)amino)methyl)-7-deazaguanosine). The polypeptide is Queuine tRNA-ribosyltransferase (Campylobacter curvus (strain 525.92)).